Reading from the N-terminus, the 955-residue chain is Vacuolar membrane protease (955 aa).

Topologically, residues M1–R16 are cytoplasmic. The helical transmembrane segment at W17–V37 threads the bilayer. Residues H38–T390 lie on the Vacuolar side of the membrane. N53 and N119 each carry an N-linked (GlcNAc...) asparagine glycan. Zn(2+)-binding residues include H174 and D186. E220 functions as the Proton acceptor in the catalytic mechanism. Residues E221, E246, and H319 each coordinate Zn(2+). Residues L391–I411 traverse the membrane as a helical segment. Topologically, residues A412–G442 are cytoplasmic. A helical transmembrane segment spans residues F443–L463. Over V464 to H473 the chain is Vacuolar. A helical transmembrane segment spans residues S474–V494. At S495–R508 the chain is on the cytoplasmic side. The helical transmembrane segment at I509–Y529 threads the bilayer. Over A530–R533 the chain is Vacuolar. Residues G534–I554 form a helical membrane-spanning segment. The Cytoplasmic segment spans residues S555 to W656. Positions S574–S590 are enriched in low complexity. Residues S574–S611 are disordered. The span at G591–T603 shows a compositional bias: acidic residues. The helical transmembrane segment at V657 to L677 threads the bilayer. Residues T678–L693 lie on the Vacuolar side of the membrane. The chain crosses the membrane as a helical span at residues F694 to I714. The Cytoplasmic portion of the chain corresponds to H715–V721. A helical membrane pass occupies residues P722–F742. Residues S743–D955 lie on the Vacuolar side of the membrane. An N-linked (GlcNAc...) asparagine glycan is attached at N826.

This sequence belongs to the peptidase M28 family. Zn(2+) serves as cofactor.

It localises to the vacuole membrane. May be involved in vacuolar sorting and osmoregulation. In Aspergillus oryzae (strain ATCC 42149 / RIB 40) (Yellow koji mold), this protein is Vacuolar membrane protease.